The chain runs to 316 residues: protein SLOW GREEN 1, chloroplastic (316 aa).

A chloroplast-targeting transit peptide spans 1–39; the sequence is MISSLSASSSLVSSFVAVKATPVTGPLIPRRDLLSIRIR. 4 TPR repeats span residues 118–151, 152–185, 226–259, and 261–293; these read VETL…QPEE, TEWK…NPLS, RDVR…DPKD, and RPYF…SPKK.

As to expression, ubiquitous. Preferentially expressed in newly formed green tissues.

Its subcellular location is the plastid. The protein resides in the chloroplast. Its function is as follows. Required for the early stage of chloroplast development. May be involved in chloroplast protein biosynthesis and/or degradation. The protein is protein SLOW GREEN 1, chloroplastic of Arabidopsis thaliana (Mouse-ear cress).